The chain runs to 23 residues: Unknown protein 1 (23 aa).

This chain is Unknown protein 1, found in Coniferiporia sulphurascens (Laminated root rot fungus).